The sequence spans 80 residues: MKKFISRPKRSSRRRKKTPIKPGENIDYKNVGLLRKFISEQGKILSKRITRLTSKQQRAMTKAIKSARILALLPFINNEN.

Basic residues predominate over residues 1 to 19; the sequence is MKKFISRPKRSSRRRKKTP. Residues 1 to 24 are disordered; the sequence is MKKFISRPKRSSRRRKKTPIKPGE.

This sequence belongs to the bacterial ribosomal protein bS18 family. In terms of assembly, part of the 30S ribosomal subunit.

It is found in the plastid. Its subcellular location is the chloroplast. This chain is Small ribosomal subunit protein bS18c, found in Staurastrum punctulatum (Green alga).